The sequence spans 99 residues: Large ribosomal subunit protein bL21 (99 aa).

This sequence belongs to the bacterial ribosomal protein bL21 family. As to quaternary structure, part of the 50S ribosomal subunit. Contacts protein L20.

This protein binds to 23S rRNA in the presence of protein L20. In Mycoplasma mobile (strain ATCC 43663 / 163K / NCTC 11711) (Mesomycoplasma mobile), this protein is Large ribosomal subunit protein bL21.